Consider the following 284-residue polypeptide: Bifunctional protein FolD (284 aa).

Residues 165–167 (GRS) and serine 190 contribute to the NADP(+) site.

Belongs to the tetrahydrofolate dehydrogenase/cyclohydrolase family. As to quaternary structure, homodimer.

The enzyme catalyses (6R)-5,10-methylene-5,6,7,8-tetrahydrofolate + NADP(+) = (6R)-5,10-methenyltetrahydrofolate + NADPH. The catalysed reaction is (6R)-5,10-methenyltetrahydrofolate + H2O = (6R)-10-formyltetrahydrofolate + H(+). The protein operates within one-carbon metabolism; tetrahydrofolate interconversion. Catalyzes the oxidation of 5,10-methylenetetrahydrofolate to 5,10-methenyltetrahydrofolate and then the hydrolysis of 5,10-methenyltetrahydrofolate to 10-formyltetrahydrofolate. The chain is Bifunctional protein FolD from Streptococcus sanguinis (strain SK36).